Consider the following 486-residue polypeptide: Ribulose bisphosphate carboxylase large chain (486 aa).

2 residues coordinate substrate: Asn-126 and Thr-176. Lys-178 acts as the Proton acceptor in catalysis. Position 180 (Lys-180) interacts with substrate. 3 residues coordinate Mg(2+): Lys-204, Asp-206, and Glu-207. Residue Lys-204 is modified to N6-carboxylysine. The active-site Proton acceptor is His-296. Arg-297, His-329, and Ser-381 together coordinate substrate.

The protein belongs to the RuBisCO large chain family. Type I subfamily. Heterohexadecamer of 8 large chains and 8 small chains. Mg(2+) serves as cofactor.

The catalysed reaction is 2 (2R)-3-phosphoglycerate + 2 H(+) = D-ribulose 1,5-bisphosphate + CO2 + H2O. The enzyme catalyses D-ribulose 1,5-bisphosphate + O2 = 2-phosphoglycolate + (2R)-3-phosphoglycerate + 2 H(+). Functionally, ruBisCO catalyzes two reactions: the carboxylation of D-ribulose 1,5-bisphosphate, the primary event in carbon dioxide fixation, as well as the oxidative fragmentation of the pentose substrate. Both reactions occur simultaneously and in competition at the same active site. The chain is Ribulose bisphosphate carboxylase large chain from Sinorhizobium medicae (strain WSM419) (Ensifer medicae).